Here is a 247-residue protein sequence, read N- to C-terminus: MPVFALIDEPVFPSPHLAEPGGLLAVGGDLSVARLLAAYRRGIFPWYDDESPILWWSPDPRPILVPGHVRVSKRLERTIRSGKFTVTLDTDFAGVIRGCAAVPRDADNGTWIVPDMIEGYERLHAAGHAHSVEAWQNGELVGGAYGVAIGKAFFGESMFHRATDASKVAFVTLCRFLDRHEFRFIDCQQATGHLLRFGAVQVRRNEFLRRLEAAREEEGMVGKWVLPRTTRCASPQPTSESSPSAKQ.

The protein belongs to the L/F-transferase family.

The protein resides in the cytoplasm. The catalysed reaction is N-terminal L-lysyl-[protein] + L-leucyl-tRNA(Leu) = N-terminal L-leucyl-L-lysyl-[protein] + tRNA(Leu) + H(+). It catalyses the reaction N-terminal L-arginyl-[protein] + L-leucyl-tRNA(Leu) = N-terminal L-leucyl-L-arginyl-[protein] + tRNA(Leu) + H(+). The enzyme catalyses L-phenylalanyl-tRNA(Phe) + an N-terminal L-alpha-aminoacyl-[protein] = an N-terminal L-phenylalanyl-L-alpha-aminoacyl-[protein] + tRNA(Phe). In terms of biological role, functions in the N-end rule pathway of protein degradation where it conjugates Leu, Phe and, less efficiently, Met from aminoacyl-tRNAs to the N-termini of proteins containing an N-terminal arginine or lysine. The polypeptide is Leucyl/phenylalanyl-tRNA--protein transferase (Solidesulfovibrio magneticus (strain ATCC 700980 / DSM 13731 / RS-1) (Desulfovibrio magneticus)).